The primary structure comprises 1284 residues: Neuronal cell adhesion molecule (1284 aa).

The first 24 residues, 1 to 24 (MMKEKSISASKASLVFFLCQMISA), serve as a signal peptide directing secretion. Residues 25-1143 (LDVPLDSKLL…ASRQVDIATQ (1119 aa)) are Extracellular-facing. Ig-like C2-type domains follow at residues 41–129 (PTIT…AAIS), 136–230 (PSRS…QPIS), 243–332 (PPVL…ISVT), 337–424 (PYWI…AFVN), 430–517 (PRIL…VQLE), and 521–608 (PTMI…AVLT). 2 disulfides stabilise this stretch: C63-C118 and C162-C213. Residue N78 is glycosylated (N-linked (GlcNAc...) asparagine). 2 N-linked (GlcNAc...) asparagine glycosylation sites follow: N218 and N290. 2 disulfides stabilise this stretch: C268/C316 and C358/C408. 6 N-linked (GlcNAc...) asparagine glycosylation sites follow: N409, N483, N576, N581, N595, and N692. 2 disulfide bridges follow: C452-C501 and C543-C592. Fibronectin type-III domains follow at residues 625–720 (PPLD…TKSA), 725–819 (NPSN…SGED), 824–926 (APGN…TPEG), 930–1026 (PPSF…IMDE), and 1040–1132 (QPLY…TGPA). Over residues 707-731 (QPSEPSEQYLTKSANPDENPSNVQG) the composition is skewed to polar residues. Residues 707 to 732 (QPSEPSEQYLTKSANPDENPSNVQGI) are disordered. 9 N-linked (GlcNAc...) asparagine glycosylation sites follow: N778, N834, N885, N969, N985, N995, N1048, N1059, and N1091. Residues 1144–1166 (GWFIGLMCAVALLILILLIVCFI) form a helical membrane-spanning segment. Residues 1167–1284 (RRNKGGKYPV…SPVNAMNSFV (118 aa)) lie on the Cytoplasmic side of the membrane. 3 stretches are compositionally biased toward basic and acidic residues: residues 1175 to 1195 (PVKE…KEDD), 1202 to 1212 (RSLESDAEDHK), and 1221 to 1230 (PSDRTVKKED). Residues 1175–1284 (PVKEKEDAHA…SPVNAMNSFV (110 aa)) are disordered. Positions 1268 to 1284 (NESSEAPSPVNAMNSFV) are enriched in polar residues.

Belongs to the immunoglobulin superfamily. L1/neurofascin/NgCAM family. Heterodimer of an alpha and a beta chain. In terms of tissue distribution, retina and developing brain.

Its subcellular location is the cell membrane. This protein is a cell adhesion molecule involved in neuron-neuron adhesion, neurite fasciculation, outgrowth of neurites, etc. Specifically involved in the development of optic fibres in the retina. The sequence is that of Neuronal cell adhesion molecule from Gallus gallus (Chicken).